The sequence spans 75 residues: Protease B inhibitor 1 (75 aa).

The residue at position 74 (Thr74) is a Phosphothreonine.

The protein belongs to the protease inhibitor I9 family. As to quaternary structure, part of the heterodimeric LMA1 complex together with the thioredoxin II/TRX2. LMA1 binds to the ATPase SEC18.

Its subcellular location is the cytoplasm. The protein localises to the nucleus. Its function is as follows. Cytosolic inhibitor of vacuolar proteinase B (yscB), probably regulating protease B activity during limited proteolysis. PBI2 is a component of the LMA1 complex, which is involved in the facilitation of vesicle fusion such as homotypic vacuole and ER-derived COPII vesicle fusion with the Golgi. This is Protease B inhibitor 1 (PBI2) from Saccharomyces cerevisiae (Baker's yeast).